Reading from the N-terminus, the 305-residue chain is PI protein (305 aa).

The protein belongs to the initiator RepB protein family. In terms of assembly, homodimer.

Its function is as follows. Initiation for plasmid R6K DNA replication. The chain is PI protein (pir) from Escherichia coli.